Reading from the N-terminus, the 647-residue chain is Exoribonuclease 2 (647 aa).

Positions arginine 191–isoleucine 517 constitute an RNB domain. Residues proline 563 to phenylalanine 645 form the S1 motif domain.

It belongs to the RNR ribonuclease family. RNase II subfamily.

Its subcellular location is the cytoplasm. The enzyme catalyses Exonucleolytic cleavage in the 3'- to 5'-direction to yield nucleoside 5'-phosphates.. In terms of biological role, involved in mRNA degradation. Hydrolyzes single-stranded polyribonucleotides processively in the 3' to 5' direction. The chain is Exoribonuclease 2 from Edwardsiella piscicida.